We begin with the raw amino-acid sequence, 262 residues long: GTP cyclohydrolase 1 type 2 homolog (262 aa).

Residues His65, Asp102, His222, and Glu225 each contribute to the a divalent metal cation site.

Belongs to the GTP cyclohydrolase I type 2/NIF3 family. As to quaternary structure, homohexamer.

The protein is GTP cyclohydrolase 1 type 2 homolog of Streptococcus pyogenes serotype M3 (strain ATCC BAA-595 / MGAS315).